Here is a 397-residue protein sequence, read N- to C-terminus: Phosphoglycerate kinase (397 aa).

Residues 21-23 (DVN), Arg36, 59-62 (HFGR), Arg119, and Arg152 contribute to the substrate site. ATP-binding positions include Lys202, Glu324, and 354–357 (GGDT).

Belongs to the phosphoglycerate kinase family. In terms of assembly, monomer.

It localises to the cytoplasm. The enzyme catalyses (2R)-3-phosphoglycerate + ATP = (2R)-3-phospho-glyceroyl phosphate + ADP. The protein operates within carbohydrate degradation; glycolysis; pyruvate from D-glyceraldehyde 3-phosphate: step 2/5. The sequence is that of Phosphoglycerate kinase from Cereibacter sphaeroides (strain ATCC 17029 / ATH 2.4.9) (Rhodobacter sphaeroides).